We begin with the raw amino-acid sequence, 300 residues long: Protein TRACHEARY ELEMENT DIFFERENTIATION-RELATED 7A (300 aa).

Residues M1–P181 are disordered. Topologically, residues M1–T187 are extracellular. Residues H12–P181 show a composition bias toward pro residues. A glycan (N-linked (GlcNAc...) asparagine) is linked at N183. Residues I188–L208 form a helical membrane-spanning segment. At W209–G300 the chain is on the cytoplasmic side.

As to expression, accumulates in cells differentiating into tracheary element (TE) which undergo secondary cell wall (SCW) formation.

It is found in the cell membrane. The protein resides in the secreted. The protein localises to the cell wall. Functionally, involved in the secondary cell wall (SCW) formation of vessel elements (e.g. protoxylem and metaxylem), thus promoting tracheary element (TE) differentiation. The sequence is that of Protein TRACHEARY ELEMENT DIFFERENTIATION-RELATED 7A from Zinnia elegans (Garden zinnia).